A 123-amino-acid polypeptide reads, in one-letter code: UPF0738 protein Bcer98_0913 (123 aa).

The protein belongs to the UPF0738 family.

This chain is UPF0738 protein Bcer98_0913, found in Bacillus cytotoxicus (strain DSM 22905 / CIP 110041 / 391-98 / NVH 391-98).